Here is a 318-residue protein sequence, read N- to C-terminus: Ribosomal RNA small subunit methyltransferase A (318 aa).

6 residues coordinate S-adenosyl-L-methionine: N40, V42, G67, E88, D118, and N137. The span at 296-305 (ADRGGSDREG) shows a compositional bias: basic and acidic residues. Residues 296–318 (ADRGGSDREGTSPPTAGQGAPAC) form a disordered region.

It belongs to the class I-like SAM-binding methyltransferase superfamily. rRNA adenine N(6)-methyltransferase family. RsmA subfamily.

It localises to the cytoplasm. It catalyses the reaction adenosine(1518)/adenosine(1519) in 16S rRNA + 4 S-adenosyl-L-methionine = N(6)-dimethyladenosine(1518)/N(6)-dimethyladenosine(1519) in 16S rRNA + 4 S-adenosyl-L-homocysteine + 4 H(+). Specifically dimethylates two adjacent adenosines (A1518 and A1519) in the loop of a conserved hairpin near the 3'-end of 16S rRNA in the 30S particle. May play a critical role in biogenesis of 30S subunits. The chain is Ribosomal RNA small subunit methyltransferase A from Mycobacterium avium (strain 104).